Consider the following 594-residue polypeptide: TOX high mobility group box family member 4-B (594 aa).

2 disordered regions span residues 160 to 225 (GTIL…PQKP) and 522 to 545 (ESPPPQMDVELVSSSPPPSLSPQC). Basic residues predominate over residues 207–217 (KPKTPKKKKKK). Positions 212–217 (KKKKKK) match the Nuclear localization signal motif. Positions 222-290 (PQKPLSAYAL…EYLKALALYK (69 aa)) form a DNA-binding region, HMG box.

Component of the PNUTS-PP1 phosphatase complex.

It is found in the nucleus. Its subcellular location is the chromosome. Transcription factor that modulates cell fate reprogramming from the somatic state to the pluripotent and neuronal fate. Also acts as a regulatory component of protein phosphatase 1 (PP1) complexes. Component of the PNUTS-PP1 protein phosphatase complex, a PP1 complex that regulates RNA polymerase II transcription pause-release. PNUTS-PP1 also plays a role in the control of chromatin structure and cell cycle progression during the transition from mitosis into interphase. This is TOX high mobility group box family member 4-B (tox4-b) from Xenopus laevis (African clawed frog).